The primary structure comprises 356 residues: MSL complex subunit 3B (356 aa).

The 349-residue stretch at 2–350 (EERTVTLEIP…SEVHYSTRNP (349 aa)) folds into the MRG domain. Disordered regions lie at residues 135–210 (TNRS…WQQD) and 225–247 (KTPVHSRSSSPTLTPSQEGSPVF). A compositionally biased stretch (low complexity) spans 142 to 156 (LSPSLRLLNPSRPQS). Polar residues-rich tracts occupy residues 178-189 (AVQSLRRSSPHT) and 229-243 (HSRSSSPTLTPSQEG).

The protein resides in the nucleus. Its function is as follows. Probable non-catalytic component of the MSL histone acetyltransferase complex, a multiprotein complex that mediates the majority of histone H4 acetylation at 'Lys-16' (H4K16ac), an epigenetic mark that prevents chromatin compaction. This chain is MSL complex subunit 3B, found in Homo sapiens (Human).